The chain runs to 736 residues: ABC transporter G family member 16 (736 aa).

One can recognise an ABC transporter domain in the interval 88 to 332 (LDFHDLVPWR…FAGFGNPIPE (245 aa)). 125–132 (GASGSGKS) lines the ATP pocket. 7 consecutive transmembrane segments (helical) span residues 410-430 (SVIN…PFWI), 449-469 (LLGM…TVFW), 484-504 (FFAF…PVFL), 525-545 (VLSH…AFAV), 569-589 (ASFW…PHVM), 590-610 (LGYT…GFFI), and 709-729 (LLIT…CLLL). Residues 430 to 640 (IEIKTLTRRS…PYEAVLQNEF (211 aa)) enclose the ABC transmembrane type-2 domain.

It belongs to the ABC transporter superfamily. ABCG family. Eye pigment precursor importer (TC 3.A.1.204) subfamily.

The protein resides in the membrane. This chain is ABC transporter G family member 16 (ABCG16), found in Arabidopsis thaliana (Mouse-ear cress).